A 311-amino-acid polypeptide reads, in one-letter code: Porphobilinogen deaminase (311 aa).

An S-(dipyrrolylmethanemethyl)cysteine modification is found at Cys245.

This sequence belongs to the HMBS family. Monomer. Dipyrromethane serves as cofactor.

The catalysed reaction is 4 porphobilinogen + H2O = hydroxymethylbilane + 4 NH4(+). It functions in the pathway porphyrin-containing compound metabolism; protoporphyrin-IX biosynthesis; coproporphyrinogen-III from 5-aminolevulinate: step 2/4. Its function is as follows. Tetrapolymerization of the monopyrrole PBG into the hydroxymethylbilane pre-uroporphyrinogen in several discrete steps. The chain is Porphobilinogen deaminase from Deinococcus deserti (strain DSM 17065 / CIP 109153 / LMG 22923 / VCD115).